The following is a 333-amino-acid chain: Ketol-acid reductoisomerase (NADP(+)) (333 aa).

In terms of domain architecture, KARI N-terminal Rossmann spans 6–186; it reads TRVYTECDAD…GALRAGAIQT (181 aa). NADP(+) is bound by residues 29 to 32, K52, S55, S57, and 87 to 90; these read YGSQ and DPAQ. The active site involves H112. G138 is an NADP(+) binding site. In terms of domain architecture, KARI C-terminal knotted spans 187–332; that stretch reads TFTEETETDL…ARLRALFSWS (146 aa). Mg(2+)-binding residues include D195, E199, E231, and E235. Substrate is bound at residue S256.

Belongs to the ketol-acid reductoisomerase family. Mg(2+) is required as a cofactor.

The catalysed reaction is (2R)-2,3-dihydroxy-3-methylbutanoate + NADP(+) = (2S)-2-acetolactate + NADPH + H(+). The enzyme catalyses (2R,3R)-2,3-dihydroxy-3-methylpentanoate + NADP(+) = (S)-2-ethyl-2-hydroxy-3-oxobutanoate + NADPH + H(+). It participates in amino-acid biosynthesis; L-isoleucine biosynthesis; L-isoleucine from 2-oxobutanoate: step 2/4. Its pathway is amino-acid biosynthesis; L-valine biosynthesis; L-valine from pyruvate: step 2/4. Involved in the biosynthesis of branched-chain amino acids (BCAA). Catalyzes an alkyl-migration followed by a ketol-acid reduction of (S)-2-acetolactate (S2AL) to yield (R)-2,3-dihydroxy-isovalerate. In the isomerase reaction, S2AL is rearranged via a Mg-dependent methyl migration to produce 3-hydroxy-3-methyl-2-ketobutyrate (HMKB). In the reductase reaction, this 2-ketoacid undergoes a metal-dependent reduction by NADPH to yield (R)-2,3-dihydroxy-isovalerate. The chain is Ketol-acid reductoisomerase (NADP(+)) from Tropheryma whipplei (strain TW08/27) (Whipple's bacillus).